The sequence spans 390 residues: MLSRKGIIPEEYVLTRLAEDPAKPRYRARQRRARFVSKKGNCNVAHKNIREQGRFLQDVFTTLVDLKWPHTLLIFTMSFLCSWLLFAMAWWLIAFAHGDLAPSEGTAEPCVTSIHSFSSAFLFSIEVQVTIGFGGRMVTEECPLAILILIVQNIVGLMINAIMLGCIFMKTAQAHRRAETLIFSKHAVIALRHGRLCFMLRVGDLRKSMIISATIHMQVVRKTTSPEGEVVPLHQVDIPMENGVGGNSIFLVAPLIIYHVIDANSPLYDLAPSDLHHHQDLEIIVILEGVVETTGITTQARTSYLADEILWGQRFVPIVAEEDGRYSVDYSKFGNTVKVPTPLCTARQLDEDHSLLEALTLASARGPLRKRSVPMAKAKPKFSISPDSLS.

Over 1–65 (MLSRKGIIPE…LQDVFTTLVD (65 aa)) the chain is Cytoplasmic. The ATP site is built by Asn48 and Arg50. A helical membrane pass occupies residues 66–92 (LKWPHTLLIFTMSFLCSWLLFAMAWWL). Topologically, residues 93–116 (IAFAHGDLAPSEGTAEPCVTSIHS) are extracellular. Cysteines 110 and 142 form a disulfide. An intramembrane region (discontinuously helical; Pore-forming) is located at residues 117-133 (FSSAFLFSIEVQVTIGF). K(+) contacts are provided by Thr130 and Phe133. The Selectivity filter signature appears at 130-135 (TIGFGG). Over 134–142 (GGRMVTEEC) the chain is Extracellular. A helical membrane pass occupies residues 143-171 (PLAILILIVQNIVGLMINAIMLGCIFMKT). Residues 172 to 390 (AQAHRRAETL…KFSISPDSLS (219 aa)) are Cytoplasmic-facing. A 1,2-diacyl-sn-glycero-3-phospho-(1D-myo-inositol-4,5-bisphosphate) is bound at residue Arg176. Tyr330 is an ATP binding site. Residue Thr341 is modified to Phosphothreonine; by MAPK1. Ser385 bears the Phosphoserine; by MAPK1 mark.

It belongs to the inward rectifier-type potassium channel (TC 1.A.2.1) family. KCNJ11 subfamily. As to quaternary structure, homotetramer; the homotetramer binds four ATP molecules (one ATP per subunit). Forms an heterooctamer with ABCC8/SUR1; one KCNJ11 homotetramer interacts with four ABCC8/SUR1 molecules. Interacts with ABCC9/SUR2. In terms of processing, phosphorylation by MAPK1 results in changes in channel gating that destabilize the closed states and reduce the ATP sensitivity.

It is found in the membrane. The catalysed reaction is K(+)(in) = K(+)(out). KATP channels are regulated by cytoplasmic ATP/ADP ratios; ATP inhibits the channel by closing the pore, while ADP activates the channel. Activated by phosphatidylinositol 4,5-biphosphate (PtdIns(4,5)P2). In terms of biological role, inward rectifier potassium channel that forms the pore of ATP-sensitive potassium channels (KATP), regulating potassium permeability as a function of cytoplasmic ATP and ADP concentrations in many different cells. Inward rectifier potassium channels are characterized by a greater tendency to allow potassium to flow into the cell rather than out of it. Their voltage dependence is regulated by the concentration of extracellular potassium; as external potassium is raised, the voltage range of the channel opening shifts to more positive voltages. The inward rectification is mainly due to the blockage of outward current by internal magnesium. Can be blocked by extracellular barium. In pancreatic cells, it forms KATP channels with ABCC8/SUR1. Can form cardiac and smooth muscle-type KATP channels with ABCC9. The sequence is that of ATP-sensitive inward rectifier potassium channel 11 (KCNJ11) from Homo sapiens (Human).